A 152-amino-acid chain; its full sequence is Ribosomal RNA large subunit methyltransferase H (152 aa).

S-adenosyl-L-methionine-binding positions include leucine 70, glycine 101, and 120–125 (LSDLTF).

This sequence belongs to the RNA methyltransferase RlmH family. In terms of assembly, homodimer.

The protein resides in the cytoplasm. It carries out the reaction pseudouridine(1915) in 23S rRNA + S-adenosyl-L-methionine = N(3)-methylpseudouridine(1915) in 23S rRNA + S-adenosyl-L-homocysteine + H(+). Its function is as follows. Specifically methylates the pseudouridine at position 1915 (m3Psi1915) in 23S rRNA. This is Ribosomal RNA large subunit methyltransferase H from Pseudothermotoga lettingae (strain ATCC BAA-301 / DSM 14385 / NBRC 107922 / TMO) (Thermotoga lettingae).